The chain runs to 443 residues: Glucose-6-phosphate isomerase (443 aa).

The Proton donor role is filled by E285. Residues H306 and K420 contribute to the active site.

Belongs to the GPI family.

It is found in the cytoplasm. The catalysed reaction is alpha-D-glucose 6-phosphate = beta-D-fructose 6-phosphate. It participates in carbohydrate biosynthesis; gluconeogenesis. The protein operates within carbohydrate degradation; glycolysis; D-glyceraldehyde 3-phosphate and glycerone phosphate from D-glucose: step 2/4. Its function is as follows. Catalyzes the reversible isomerization of glucose-6-phosphate to fructose-6-phosphate. This is Glucose-6-phosphate isomerase from Staphylococcus aureus (strain NCTC 8325 / PS 47).